We begin with the raw amino-acid sequence, 155 residues long: cAMP-dependent protein kinase type II-alpha regulatory subunit (155 aa).

The segment at 1 to 34 (SGSQDLEPSSGLVTDAIADSESEDDEDLDVPIPS) is disordered. A dimerization and phosphorylation region spans residues 1 to 81 (SGSQDLEPSS…LQEACKDILL (81 aa)). Positions 18–29 (ADSESEDDEDLD) are enriched in acidic residues. Phosphoserine occurs at positions 20 and 22. At serine 41 the chain carries Phosphoserine; by PKA. 3',5'-cyclic AMP is bound by residues 82–155 (FKNL…ALMY) and glutamate 150.

It belongs to the cAMP-dependent kinase regulatory chain family. As to quaternary structure, the inactive form of the enzyme is composed of two regulatory chains and two catalytic chains. Activation by cAMP produces two active catalytic monomers and a regulatory dimer that binds four cAMP molecules. Interacts with AKAP4 and CBFA2T3. Interacts with the phosphorylated form of PJA2. Interacts with MYRIP; this interaction may link PKA to components of the exocytosis machinery, thus facilitating exocytosis, including insulin release. Forms a complex composed of PRKAR2A, GSK3B and GSKIP through GSKIP interaction; facilitates PKA-induced phosphorylation and regulates GSK3B activity. Interacts with ADCY8; inhibits adenylate cyclase activity through PKA phosphorylation. Post-translationally, phosphorylated by the activated catalytic chain. In terms of tissue distribution, four types of regulatory chains are found: I-alpha, I-beta, II-alpha, and II-beta. Their expression varies among tissues and is in some cases constitutive and in others inducible.

It is found in the cytoplasm. It localises to the cell membrane. Functionally, regulatory subunit of the cAMP-dependent protein kinases involved in cAMP signaling in cells. Type II regulatory chains mediate membrane association by binding to anchoring proteins, including the MAP2 kinase. The chain is cAMP-dependent protein kinase type II-alpha regulatory subunit (PRKAR2A) from Sus scrofa (Pig).